The sequence spans 163 residues: 3-hydroxyacyl-[acyl-carrier-protein] dehydratase FabZ (163 aa).

H61 is a catalytic residue.

The protein belongs to the thioester dehydratase family. FabZ subfamily.

Its subcellular location is the cytoplasm. It catalyses the reaction a (3R)-hydroxyacyl-[ACP] = a (2E)-enoyl-[ACP] + H2O. Functionally, involved in unsaturated fatty acids biosynthesis. Catalyzes the dehydration of short chain beta-hydroxyacyl-ACPs and long chain saturated and unsaturated beta-hydroxyacyl-ACPs. In Dinoroseobacter shibae (strain DSM 16493 / NCIMB 14021 / DFL 12), this protein is 3-hydroxyacyl-[acyl-carrier-protein] dehydratase FabZ.